The sequence spans 418 residues: Probable serine hydroxymethyltransferase (418 aa).

Residues leucine 118 and 122-124 each bind (6S)-5,6,7,8-tetrahydrofolate; that span reads GHL. An N6-(pyridoxal phosphate)lysine modification is found at lysine 226. 351 to 353 contacts (6S)-5,6,7,8-tetrahydrofolate; it reads SPF.

The protein belongs to the SHMT family. Homodimer. It depends on pyridoxal 5'-phosphate as a cofactor.

It is found in the cytoplasm. The catalysed reaction is (6R)-5,10-methylene-5,6,7,8-tetrahydrofolate + glycine + H2O = (6S)-5,6,7,8-tetrahydrofolate + L-serine. It participates in one-carbon metabolism; tetrahydrofolate interconversion. In terms of biological role, catalyzes the reversible interconversion of serine and glycine with tetrahydrofolate (THF) serving as the one-carbon carrier. This reaction serves as the major source of one-carbon groups required for the biosynthesis of purines, thymidylate, methionine, and other important biomolecules. In Mesomycoplasma hyopneumoniae (strain J / ATCC 25934 / NCTC 10110) (Mycoplasma hyopneumoniae), this protein is Probable serine hydroxymethyltransferase.